The chain runs to 318 residues: D-alanine--D-alanine ligase (318 aa).

One can recognise an ATP-grasp domain in the interval 101 to 307 (KKIIQYEGLP…FPDLIEKLVE (207 aa)). An ATP-binding site is contributed by 135 to 190 (CREMGLPLVVKAPTQGSTIGMSFVHKEEDMAGALELAYDYDPVALVEQFIRGTEVT). The Mg(2+) site is built by Asp-261, Glu-274, and Asn-276.

This sequence belongs to the D-alanine--D-alanine ligase family. The cofactor is Mg(2+). Mn(2+) serves as cofactor.

It is found in the cytoplasm. It catalyses the reaction 2 D-alanine + ATP = D-alanyl-D-alanine + ADP + phosphate + H(+). The protein operates within cell wall biogenesis; peptidoglycan biosynthesis. Cell wall formation. This is D-alanine--D-alanine ligase from Pelotomaculum thermopropionicum (strain DSM 13744 / JCM 10971 / SI).